A 301-amino-acid polypeptide reads, in one-letter code: Protoheme IX farnesyltransferase (301 aa).

The next 9 membrane-spanning stretches (helical) occupy residues 29–49 (VVALMLLTVLVGMCLAVPGTV), 51–71 (LVPLIAGMAGIGMMAGSAAAF), 96–116 (ISIIKAISFASILGTLGFIIL), 123–143 (LTAWLTFASLIGYAVVYTAYL), 151–171 (IVVGGLAGAMPPLLGWTAVTG), 177–197 (ALLLVIIIFAWTPPHFWALAI), 223–243 (CIFLYTVLLAIACLLPVLVGM), 244–264 (CGPVYLVSSTLLSAGFIYKAW), and 281–301 (FSIYHLMLLFIALLVDHYLWV).

This sequence belongs to the UbiA prenyltransferase family. Protoheme IX farnesyltransferase subfamily.

It localises to the cell inner membrane. The enzyme catalyses heme b + (2E,6E)-farnesyl diphosphate + H2O = Fe(II)-heme o + diphosphate. Its pathway is porphyrin-containing compound metabolism; heme O biosynthesis; heme O from protoheme: step 1/1. Converts heme B (protoheme IX) to heme O by substitution of the vinyl group on carbon 2 of heme B porphyrin ring with a hydroxyethyl farnesyl side group. In Shewanella pealeana (strain ATCC 700345 / ANG-SQ1), this protein is Protoheme IX farnesyltransferase.